Reading from the N-terminus, the 349-residue chain is UDP-3-O-acylglucosamine N-acyltransferase (349 aa).

The Proton acceptor role is filled by H240.

This sequence belongs to the transferase hexapeptide repeat family. LpxD subfamily. Homotrimer.

It catalyses the reaction a UDP-3-O-[(3R)-3-hydroxyacyl]-alpha-D-glucosamine + a (3R)-hydroxyacyl-[ACP] = a UDP-2-N,3-O-bis[(3R)-3-hydroxyacyl]-alpha-D-glucosamine + holo-[ACP] + H(+). It functions in the pathway bacterial outer membrane biogenesis; LPS lipid A biosynthesis. In terms of biological role, catalyzes the N-acylation of UDP-3-O-acylglucosamine using 3-hydroxyacyl-ACP as the acyl donor. Is involved in the biosynthesis of lipid A, a phosphorylated glycolipid that anchors the lipopolysaccharide to the outer membrane of the cell. This chain is UDP-3-O-acylglucosamine N-acyltransferase, found in Porphyromonas gingivalis (strain ATCC BAA-308 / W83).